The sequence spans 327 residues: Phosphate acyltransferase (327 aa).

Belongs to the PlsX family. Homodimer. Probably interacts with PlsY.

Its subcellular location is the cytoplasm. It carries out the reaction a fatty acyl-[ACP] + phosphate = an acyl phosphate + holo-[ACP]. It participates in lipid metabolism; phospholipid metabolism. Its function is as follows. Catalyzes the reversible formation of acyl-phosphate (acyl-PO(4)) from acyl-[acyl-carrier-protein] (acyl-ACP). This enzyme utilizes acyl-ACP as fatty acyl donor, but not acyl-CoA. The chain is Phosphate acyltransferase from Thermosipho africanus (strain TCF52B).